The sequence spans 299 residues: MTFLKEYVIVSGASGFIGKHLLEALKKSGISVVAITRDVIKNNSNALANVRWCSWDNIELLVEELSIDSALIGIIHLATEYGHKTSSLINIEDANVIKPLKLLDLAIKYRADIFLNTDSFFAKKDFNYQHMRPYIITKRHFDEIGHYYANMHDISFVNMRLEHVYGPGDGENKFIPYIIDCLNKKQSCVKCTTGEQIRDFIFVDDVVNAYLTILENRKEVPSYTEYQVGTGAGVSLKDFLVYLQNTMMPGSSSIFEFGAIEQRDNEIMFSVANNKNLKAMGWKPNFDYKKGIEELLKRL.

Residue Thr-117 coordinates substrate. Tyr-134 acts as the Proton acceptor in catalysis.

The protein belongs to the NAD(P)-dependent epimerase/dehydratase family.

It catalyses the reaction CDP-alpha-D-abequose + NADP(+) = CDP-4-dehydro-3,6-dideoxy-alpha-D-glucose + NADPH + H(+). It functions in the pathway bacterial outer membrane biogenesis; LPS O-antigen biosynthesis. In Salmonella typhimurium (strain LT2 / SGSC1412 / ATCC 700720), this protein is CDP-abequose synthase (rfbJ).